The following is a 122-amino-acid chain: Urease subunit beta (122 aa).

Belongs to the urease beta subunit family. Heterotrimer of UreA (gamma), UreB (beta) and UreC (alpha) subunits. Three heterotrimers associate to form the active enzyme.

It localises to the cytoplasm. It carries out the reaction urea + 2 H2O + H(+) = hydrogencarbonate + 2 NH4(+). The protein operates within nitrogen metabolism; urea degradation; CO(2) and NH(3) from urea (urease route): step 1/1. This Acetivibrio thermocellus (strain ATCC 27405 / DSM 1237 / JCM 9322 / NBRC 103400 / NCIMB 10682 / NRRL B-4536 / VPI 7372) (Clostridium thermocellum) protein is Urease subunit beta.